The chain runs to 377 residues: D-alanine--D-alanine ligase (377 aa).

Positions 140–349 (KELLTVNGIR…NAKLVDMLID (210 aa)) constitute an ATP-grasp domain. An ATP-binding site is contributed by 170–225 (VAELGNIVFVKAANQGSSVGISRVTNAEEYTEALSDSFQYDYKVLIEEAVNGAREL). Mg(2+) is bound by residues aspartate 303, glutamate 316, and asparagine 318.

The protein belongs to the D-alanine--D-alanine ligase family. It depends on Mg(2+) as a cofactor. The cofactor is Mn(2+).

It localises to the cytoplasm. It catalyses the reaction 2 D-alanine + ATP = D-alanyl-D-alanine + ADP + phosphate + H(+). Its pathway is cell wall biogenesis; peptidoglycan biosynthesis. Cell wall formation. The sequence is that of D-alanine--D-alanine ligase from Leuconostoc mesenteroides.